The sequence spans 404 residues: Tryptophan synthase beta chain (404 aa).

Position 98 is an N6-(pyridoxal phosphate)lysine (Lys-98).

Belongs to the TrpB family. Tetramer of two alpha and two beta chains. Pyridoxal 5'-phosphate is required as a cofactor.

It catalyses the reaction (1S,2R)-1-C-(indol-3-yl)glycerol 3-phosphate + L-serine = D-glyceraldehyde 3-phosphate + L-tryptophan + H2O. It participates in amino-acid biosynthesis; L-tryptophan biosynthesis; L-tryptophan from chorismate: step 5/5. Functionally, the beta subunit is responsible for the synthesis of L-tryptophan from indole and L-serine. The sequence is that of Tryptophan synthase beta chain (trpB) from Methanocaldococcus jannaschii (strain ATCC 43067 / DSM 2661 / JAL-1 / JCM 10045 / NBRC 100440) (Methanococcus jannaschii).